A 366-amino-acid chain; its full sequence is MLYYLHYYSGYLGILNVFKYITFRAMGAAITSLVLCWLLGRPMISLLRKLKAGQPIRGKEVVKDLAALHGSKSGTPTMGGLLILLAVSLSCLIWVIPTNKFFWLSLLSMLFMGGIGFWDDFKKVIQKKHYGISGKIKLLAQAIVGVVVGIVLLADPETSRLAQKLTIPFLKEVKHIDIGWMAIPFFILVVMGSSNAVNLTDGLDGLAAGCTIGVAFVYAVFSYISGRADMSGYLFLPYIKGAGELTIFCSALIGACMGFLWYNCYPAAVFMGDTGSLAIGSALGVVAIILGQELLLVIAGGIFVIEATSVILQVASFKLTGKRLFAMAPLHHHFELKGWSETAVTVRFWILSLLFGLLALSSLKIR.

10 helical membrane passes run 27–47 (GAAI…ISLL), 76–96 (PTMG…IWVI), 101–121 (FFWL…WDDF), 136–156 (IKLL…LADP), 176–196 (IDIG…SSNA), 205–225 (GLAA…SYIS), 241–261 (GAGE…GFLW), 264–284 (CYPA…SALG), 285–305 (VVAI…IFVI), and 343–363 (AVTV…LSSL).

This sequence belongs to the glycosyltransferase 4 family. MraY subfamily. Requires Mg(2+) as cofactor.

Its subcellular location is the cell inner membrane. It catalyses the reaction UDP-N-acetyl-alpha-D-muramoyl-L-alanyl-gamma-D-glutamyl-meso-2,6-diaminopimeloyl-D-alanyl-D-alanine + di-trans,octa-cis-undecaprenyl phosphate = di-trans,octa-cis-undecaprenyl diphospho-N-acetyl-alpha-D-muramoyl-L-alanyl-D-glutamyl-meso-2,6-diaminopimeloyl-D-alanyl-D-alanine + UMP. Its pathway is cell wall biogenesis; peptidoglycan biosynthesis. Functionally, catalyzes the initial step of the lipid cycle reactions in the biosynthesis of the cell wall peptidoglycan: transfers peptidoglycan precursor phospho-MurNAc-pentapeptide from UDP-MurNAc-pentapeptide onto the lipid carrier undecaprenyl phosphate, yielding undecaprenyl-pyrophosphoryl-MurNAc-pentapeptide, known as lipid I. The protein is Phospho-N-acetylmuramoyl-pentapeptide-transferase of Methylacidiphilum infernorum (isolate V4) (Methylokorus infernorum (strain V4)).